We begin with the raw amino-acid sequence, 235 residues long: Calcium-activated potassium channel subunit beta-2 (235 aa).

Residues M1 to D45 form a ball and chain region. The Cytoplasmic segment spans residues M1–R46. A helical membrane pass occupies residues A47–I67. Over T68–N194 the chain is Extracellular. 3 N-linked (GlcNAc...) asparagine glycosylation sites follow: N88, N96, and N119. Residues V195 to A215 form a helical membrane-spanning segment. At M216–R235 the chain is on the cytoplasmic side.

Belongs to the KCNMB (TC 8.A.14.1) family. KCNMB2 subfamily. In terms of assembly, interacts with KCNMA1 tetramer. There are probably 4 molecules of KCMNB2 per KCNMA1 tetramer. N-glycosylated. As to expression, highly expressed in brain and heart. Also expressed in lung.

The protein resides in the membrane. Functionally, regulatory subunit of the calcium activated potassium KCNMA1 (maxiK) channel. Modulates the calcium sensitivity and gating kinetics of KCNMA1, thereby contributing to KCNMA1 channel diversity. Acts as a negative regulator that confers rapid and complete inactivation of KCNMA1 channel complex. In Rattus norvegicus (Rat), this protein is Calcium-activated potassium channel subunit beta-2 (Kcnmb2).